Reading from the N-terminus, the 344-residue chain is Heat-inducible transcription repressor HrcA (344 aa).

Belongs to the HrcA family.

Functionally, negative regulator of class I heat shock genes (grpE-dnaK-dnaJ and groELS operons). Prevents heat-shock induction of these operons. In Streptococcus equi subsp. equi (strain 4047), this protein is Heat-inducible transcription repressor HrcA.